A 332-amino-acid polypeptide reads, in one-letter code: Protein pelota homolog (332 aa).

It belongs to the eukaryotic release factor 1 family. Pelota subfamily. In terms of assembly, monomer. The cofactor is a divalent metal cation.

It is found in the cytoplasm. May function in recognizing stalled ribosomes, interact with stem-loop structures in stalled mRNA molecules, and effect endonucleolytic cleavage of the mRNA. May play a role in the release non-functional ribosomes and degradation of damaged mRNAs. Has endoribonuclease activity. This is Protein pelota homolog from Pyrobaculum aerophilum (strain ATCC 51768 / DSM 7523 / JCM 9630 / CIP 104966 / NBRC 100827 / IM2).